Consider the following 530-residue polypeptide: S-adenosylhomocysteine hydrolase-like protein 1 (530 aa).

M1 carries the post-translational modification N-acetylmethionine. N-acetylserine is present on S2. Phosphoserine is present on S2. Position 40 is an N6-acetyllysine (K40). Residues 53 to 103 (KFPTKTGRRSLSRSISQSSTDSYSSAASYTDSSDDEVSPREKQQTNSKGSS) are disordered. A compositionally biased stretch (low complexity) spans 64 to 83 (SRSISQSSTDSYSSAASYTD). The segment at 65–92 (RSISQSSTDSYSSAASYTDSSDDEVSPR) is PEST. Phosphoserine is present on residues S68, S71, S74, S77, and S84. The interval 138-201 (QGEKPLAGAK…EAGVAVFAWK (64 aa)) is interaction with BCL2L10. 5 residues coordinate substrate: T155, D229, E254, K284, and D288. The NAD binding stretch occupies residues 281–448 (SVTKQKFDNL…EGRLLNLSCS (168 aa)). Residues 318 to 322 (GYGEV), E341, and N376 contribute to the NAD(+) site. S391 is modified (phosphoserine). 397-399 (MGH) is a binding site for NAD(+). Residues 520–530 (NGPFKPNYYRY) form a PDZ-binding region.

Belongs to the adenosylhomocysteinase family. Forms multimers. Forms heteromultimers with AHCYL2 (via the C-terminal region). Interacts (when phosphorylated) with ITPR1 (when not phosphorylated); the interaction suppresses inositol 1,4,5-trisphosphate binding to ITPR1. Interacts with BCL2L10; this strengthens the interaction of AHCYL1 with ITPR1. Interacts with CFTR and SLC26A6; the interactions take place once AHCYL1 is released from ITPR1 and increase CFTR and SLC26A6 activities. Interacts with RRM1; in a phosphorylation- and (dATP)-dependent manner. Interacts (via PEST domain when phosphorylated) with SLC4A4 isoform 1 but not isoform 2; the interaction increases SLC4A4 isoform 1 activity. Interacts (when phosphorylated) with SLC9A3; the interaction is required for SLC9A3 apical location and activity. Interacts (when phosphorylated) with FIP1L1; the interaction is direct and associates AHCYL1 with the CPSF complex and RNA. Interacts with PAPOLA. Interacts with ZCCHC4. Interacts with AHCY. The cofactor is NAD(+). Phosphorylated at Ser/Thr residues between Ser-68 and Thr-72 in the PEST region: required for interaction with dATP-bound RRM1 and ITPR1. Phosphorylation at Ser-68 by PRKD1 and CAMK4 is required for further phosphorylations by CSNK1A1. Phosphorylation is induced by oxidative stress. Probably phosphorylated by CAMK2A; phosphorylation at Ser-68 may be required for interaction with SLC9A3. Dephosphorylated in response to apoptotic stress conditions which causes translocation of both AHCYL1 and BCL2L10 from mitochondria-associated endoplasmic reticulum membranes and promotes apoptosis. Expressed in dendritic cells.

Its subcellular location is the endoplasmic reticulum. The protein localises to the cytoplasm. It localises to the cytosol. It is found in the apical cell membrane. The protein resides in the microsome. Its function is as follows. Multifaceted cellular regulator which coordinates several essential cellular functions including regulation of epithelial HCO3(-) and fluid secretion, mRNA processing and DNA replication. Regulates ITPR1 sensitivity to inositol 1,4,5-trisphosphate, competing for the common binding site and acting as endogenous 'pseudoligand' whose inhibitory activity can be modulated by its phosphorylation status. Promotes the formation of contact points between the endoplasmic reticulum (ER) and mitochondria, facilitating transfer of Ca(2+) from the ER to mitochondria. Under normal cellular conditions, functions cooperatively with BCL2L10 to limit ITPR1-mediated Ca(2+) release but, under apoptotic stress conditions, dephosphorylated which promotes dissociation of both AHCYL1 and BCL2L10 from mitochondria-associated endoplasmic reticulum membranes, inhibits BCL2L10 interaction with ITPR1 and leads to increased Ca(2+) transfer to mitochondria which promotes apoptosis. In the pancreatic and salivary ducts, at resting state, attenuates inositol 1,4,5-trisphosphate-induced calcium release by interacting with ITPR1. When extracellular stimuli induce ITPR1 phosphorylation or inositol 1,4,5-trisphosphate production, dissociates from ITPR1 to interact with CFTR and SLC26A6, mediating their synergistic activation by calcium and cAMP that stimulates the epithelial secretion of electrolytes and fluid. Also activates basolateral SLC4A4 isoform 1 to coordinate fluid and HCO3(-) secretion. Inhibits the effect of STK39 on SLC4A4 and CFTR by recruiting PP1 phosphatase which activates SLC4A4, SLC26A6 and CFTR through dephosphorylation. Mediates the induction of SLC9A3 surface expression produced by Angiotensin-2. Depending on the cell type, activates SLC9A3 in response to calcium or reverses SLC9A3R2-dependent calcium inhibition. May modulate the polyadenylation state of specific mRNAs, both by controlling the subcellular location of FIP1L1 and by inhibiting PAPOLA activity, in response to a stimulus that alters its phosphorylation state. Acts as a (dATP)-dependent inhibitor of ribonucleotide reductase large subunit RRM1, controlling the endogenous dNTP pool and ensuring normal cell cycle progression. In vitro does not exhibit any S-adenosyl-L-homocysteine hydrolase activity. This chain is S-adenosylhomocysteine hydrolase-like protein 1, found in Homo sapiens (Human).